Consider the following 198-residue polypeptide: Protein-L-isoaspartate O-methyltransferase (198 aa).

Serine 50 is an active-site residue.

The protein belongs to the methyltransferase superfamily. L-isoaspartyl/D-aspartyl protein methyltransferase family.

Its subcellular location is the cytoplasm. The catalysed reaction is [protein]-L-isoaspartate + S-adenosyl-L-methionine = [protein]-L-isoaspartate alpha-methyl ester + S-adenosyl-L-homocysteine. Functionally, catalyzes the methyl esterification of L-isoaspartyl residues in peptides and proteins that result from spontaneous decomposition of normal L-aspartyl and L-asparaginyl residues. It plays a role in the repair and/or degradation of damaged proteins. This is Protein-L-isoaspartate O-methyltransferase from Thermosipho melanesiensis (strain DSM 12029 / CIP 104789 / BI429).